Consider the following 1312-residue polypeptide: uncharacterized protein (1312 aa).

The first 20 residues, 1-20 (MRNNLIYTMFLSCLHFETFC), serve as a signal peptide directing secretion. Positions 299-344 (TTTSSSTMLSSTTLLTTETETRESSSTGSTQTTTPSTEPSTTITTP) are enriched in low complexity. 8 disordered regions span residues 299–503 (TTTS…TTTY), 565–609 (EITS…PTGG), 645–692 (KETR…PTGG), 749–775 (SSSS…PTGG), 812–864 (KTRT…GGTT), 899–942 (KTRT…PTGG), 1048–1079 (KTRT…TGGT), and 1114–1165 (NTTR…TLET). A compositionally biased stretch (polar residues) spans 345–357 (MEQSSTVSSVQKT). The segment covering 365 to 503 (SSSTTVPTSA…STPATPTTTY (139 aa)) has biased composition (low complexity). Over residues 565-574 (EITSDAEGCK) the composition is skewed to basic and acidic residues. Positions 576 to 609 (TSSTPTPSSTSVHSTTATPSTTPGTTTYNWPTGG) are enriched in low complexity. Basic and acidic residues predominate over residues 645–659 (KETRTETTTDADGCK). Positions 660 to 692 (KTSSTSSSTPSLKHSTTPTPTPGTTTYNWPTGG) are enriched in low complexity. Positions 813-825 (TRTETTTDAEGCK) are enriched in basic and acidic residues. Over residues 826 to 864 (KTSSTSKISTTPTSPTSSKPTPTSTSMTTTYNWPTGGTT) the composition is skewed to low complexity. The span at 899–908 (KTRTETTTDA) shows a compositional bias: polar residues. Over residues 914-942 (TSSTSLKPTSPSSSTASPPTTTYNWPTGG) the composition is skewed to low complexity. Positions 1048–1057 (KTRTETTSDA) are enriched in polar residues. Over residues 1063 to 1076 (TSTTQTPTTFNWPT) the composition is skewed to low complexity. Residues 1114–1123 (NTTRTETTSD) are compositionally biased toward polar residues. The segment covering 1130–1154 (TSSGTTSTMSPGTTGGTTVSRTTNS) has biased composition (low complexity). The span at 1155–1164 (NNPIDSSTLE) shows a compositional bias: polar residues. The 68-residue stretch at 1239 to 1306 (ATCSSLNLNL…WSGTPEKCVA (68 aa)) folds into the Sushi domain. 2 cysteine pairs are disulfide-bonded: Cys-1241–Cys-1291 and Cys-1273–Cys-1304.

Its subcellular location is the secreted. This is an uncharacterized protein from Caenorhabditis elegans.